Consider the following 342-residue polypeptide: Glyceraldehyde-3-phosphate dehydrogenase (342 aa).

Residues 12 to 13 (RI), aspartate 34, lysine 78, and threonine 120 each bind NAD(+). D-glyceraldehyde 3-phosphate is bound by residues 151–153 (SCT) and threonine 182. The active-site Nucleophile is the cysteine 152. Asparagine 183 contributes to the NAD(+) binding site. D-glyceraldehyde 3-phosphate contacts are provided by residues arginine 197, 210 to 211 (TG), and arginine 233. NAD(+) is bound at residue asparagine 322.

This sequence belongs to the glyceraldehyde-3-phosphate dehydrogenase family. In terms of assembly, homotetramer.

Its subcellular location is the cytoplasm. The catalysed reaction is D-glyceraldehyde 3-phosphate + phosphate + NAD(+) = (2R)-3-phospho-glyceroyl phosphate + NADH + H(+). It participates in carbohydrate degradation; glycolysis; pyruvate from D-glyceraldehyde 3-phosphate: step 1/5. In terms of biological role, catalyzes the oxidative phosphorylation of glyceraldehyde 3-phosphate (G3P) to 1,3-bisphosphoglycerate (BPG) using the cofactor NAD. The first reaction step involves the formation of a hemiacetal intermediate between G3P and a cysteine residue, and this hemiacetal intermediate is then oxidized to a thioester, with concomitant reduction of NAD to NADH. The reduced NADH is then exchanged with the second NAD, and the thioester is attacked by a nucleophilic inorganic phosphate to produce BPG. The polypeptide is Glyceraldehyde-3-phosphate dehydrogenase (gap) (Aquifex aeolicus (strain VF5)).